We begin with the raw amino-acid sequence, 148 residues long: Endothelial differentiation-related factor 1 (148 aa).

The residue at position 2 (A2) is an N-acetylalanine. A Phosphoserine modification is found at S4. K25 carries the N6-methyllysine modification. The tract at residues 34–67 is disordered; the sequence is RGEDVETSKKWAAGQNKQHSITKNTAKLDRETEE. An interaction with NR5A2, PPARG and NR1H3 region spans residues 37–113; it reads DVETSKKWAA…QVIADYESGR (77 aa). A compositionally biased stretch (polar residues) spans 48 to 58; the sequence is QNKQHSITKNT. Residues 69-108 form an interaction with TBP and NR5A1 region; sequence HHDRVTLEVGKVIQRGRQSKGLTQKDLATKINEKPQVIAD. Positions 81 to 88 match the IQ motif motif; it reads IQRGRQSK. The HTH cro/C1-type domain maps to 81–135; that stretch reads IQRGRQSKGLTQKDLATKINEKPQVIADYESGRAIPNNQVLGKIERAIGLKLRGK. The segment at residues 92 to 111 is a DNA-binding region (H-T-H motif); the sequence is QKDLATKINEKPQVIADYES.

As to quaternary structure, interacts with TBP and the transcription factor IID (TFIID) complex, NR5A2, NR1H3 and PPARG. Interaction with TBP is regulated by phosphorylation. Binds NR5A1, ATF1, FOS and JUN via their conserved basic region. Binding to calmodulin is regulated by calcium and phosphorylation of the IQ motif. Post-translationally, phosphorylated. As to expression, expressed in brain, liver, kidney and heart (at protein level). Also expressed in testis.

It is found in the cytoplasm. It localises to the nucleus. In terms of biological role, transcriptional coactivator stimulating NR5A1 and ligand-dependent NR1H3/LXRA and PPARG transcriptional activities. Enhances the DNA-binding activity of ATF1, ATF2, CREB1 and NR5A1. Regulates nitric oxid synthase activity probably by sequestering calmodulin in the cytoplasm. Might function in endothelial cells differentiation, hormone-induced cardiomyocytes hypertrophy and lipid metabolism. The protein is Endothelial differentiation-related factor 1 (Edf1) of Mus musculus (Mouse).